We begin with the raw amino-acid sequence, 320 residues long: MGCQDEQLVQTICDLYEKISKLESLKPSEDVNILFKQLVSTCIPPNPNIDVTKMCDRVQEIRLNLIKICGLAEGHLENHFSSILTSYQDNPLHHLNIFPYYNNYLKLGKLEFDLLEQNLNGFVPKSVAFIGSGPLPLTSIVLASFHLKDTIFHNFDIDPSANSLASLLVSSDPDISQRMFFHTVDIMDVTESLKSFDVVFLAALVGMNKEEKVKVIEHLQKHMAPGAVLMLRSAHGPRAFLYPIVEPCDLQGFEVLSIYHPTDDVINSVVISKKHPVVSIGNVGGPNSCLLKPCNCSKTHAKMNKNMMIEEFGAREEQLS.

It belongs to the nicotianamine synthase (NAS)-like family. In terms of tissue distribution, in shoots.

It catalyses the reaction 3 S-adenosyl-L-methionine = nicotianamine + 3 S-methyl-5'-thioadenosine + 3 H(+). Functionally, synthesizes nicotianamine, a polyamine which serves as a sensor for the physiological iron status within the plant, and/or might be involved in the transport of iron. This Arabidopsis thaliana (Mouse-ear cress) protein is Nicotianamine synthase 3 (NAS3).